The chain runs to 242 residues: Vacuole localized DSC protein 1 (242 aa).

2 consecutive transmembrane segments (helical) span residues 128–148 and 152–172; these read PYGFVIMLLIREFTCPVPTAF and LLLVLLDILLLFCQIVIINGS.

As to quaternary structure, part of the vacuole-localized DSC E3 ligase complex composed of at least TUL1, DSC2, DSC3, UBX3, CDC48 and VLD1.

Its subcellular location is the vacuole membrane. Component of the vacuole-localized DSC E3 ubiquitin ligase complex involved in the targeting of the complex to the vacuole membrane via the AP3 pathway to ubiquinate vacuolar membrane proteins. Competes with GLD1 to determine the subcellular localizations of the DSC complex. The polypeptide is Vacuole localized DSC protein 1 (Saccharomyces cerevisiae (strain ATCC 204508 / S288c) (Baker's yeast)).